A 389-amino-acid chain; its full sequence is Succinate--CoA ligase [ADP-forming] subunit beta (389 aa).

Positions 9–244 (KEIFRSMGVA…LDEEDPKEIE (236 aa)) constitute an ATP-grasp domain. Residues Lys-46, 53–55 (GRG), Glu-99, Cys-102, and Glu-107 contribute to the ATP site. Mg(2+) is bound by residues Asn-199 and Asp-213. Residues Asn-264 and 321-323 (GIM) each bind substrate.

Belongs to the succinate/malate CoA ligase beta subunit family. In terms of assembly, heterotetramer of two alpha and two beta subunits. It depends on Mg(2+) as a cofactor.

It carries out the reaction succinate + ATP + CoA = succinyl-CoA + ADP + phosphate. It catalyses the reaction GTP + succinate + CoA = succinyl-CoA + GDP + phosphate. Its pathway is carbohydrate metabolism; tricarboxylic acid cycle; succinate from succinyl-CoA (ligase route): step 1/1. In terms of biological role, succinyl-CoA synthetase functions in the citric acid cycle (TCA), coupling the hydrolysis of succinyl-CoA to the synthesis of either ATP or GTP and thus represents the only step of substrate-level phosphorylation in the TCA. The beta subunit provides nucleotide specificity of the enzyme and binds the substrate succinate, while the binding sites for coenzyme A and phosphate are found in the alpha subunit. In Macrococcus caseolyticus (strain JCSC5402) (Macrococcoides caseolyticum), this protein is Succinate--CoA ligase [ADP-forming] subunit beta.